A 59-amino-acid chain; its full sequence is UPF0434 protein lpl1884 (59 aa).

The protein belongs to the UPF0434 family.

This is UPF0434 protein lpl1884 from Legionella pneumophila (strain Lens).